The chain runs to 181 residues: Ribulose bisphosphate carboxylase small subunit, chloroplastic 2 (181 aa).

A chloroplast-targeting transit peptide spans 1 to 54 (MASSMLSSAAVVTSPAQATMVAPFTGLKSSAAFPVTRKANNDITSIASNGGRVS).

It belongs to the RuBisCO small chain family. Heterohexadecamer of 8 large and 8 small subunits.

It is found in the plastid. Its subcellular location is the chloroplast. Functionally, ruBisCO catalyzes two reactions: the carboxylation of D-ribulose 1,5-bisphosphate, the primary event in carbon dioxide fixation, as well as the oxidative fragmentation of the pentose substrate. Both reactions occur simultaneously and in competition at the same active site. Although the small subunit is not catalytic it is essential for maximal activity. The polypeptide is Ribulose bisphosphate carboxylase small subunit, chloroplastic 2 (Brassica napus (Rape)).